The following is a 275-amino-acid chain: Nitrogenase iron protein 1 (275 aa).

9–16 is a binding site for ATP; the sequence is GKGGIGKS. Residue C97 participates in [4Fe-4S] cluster binding. R100 carries the post-translational modification ADP-ribosylarginine; by dinitrogenase reductase ADP-ribosyltransferase. Residue C132 coordinates [4Fe-4S] cluster.

Belongs to the NifH/BchL/ChlL family. In terms of assembly, homodimer. It depends on [4Fe-4S] cluster as a cofactor. The reversible ADP-ribosylation of Arg-100 inactivates the nitrogenase reductase and regulates nitrogenase activity.

The enzyme catalyses N2 + 8 reduced [2Fe-2S]-[ferredoxin] + 16 ATP + 16 H2O = H2 + 8 oxidized [2Fe-2S]-[ferredoxin] + 2 NH4(+) + 16 ADP + 16 phosphate + 6 H(+). Functionally, the key enzymatic reactions in nitrogen fixation are catalyzed by the nitrogenase complex, which has 2 components: the iron protein and the molybdenum-iron protein. The polypeptide is Nitrogenase iron protein 1 (nifH1) (Methanosarcina barkeri).